We begin with the raw amino-acid sequence, 435 residues long: Eukaryotic peptide chain release factor subunit 1-3 (435 aa).

Position 2 is an N-acetylalanine (Ala2).

The protein belongs to the eukaryotic release factor 1 family. Heterodimer of two subunits, one of which binds GTP.

The protein resides in the cytoplasm. Functionally, directs the termination of nascent peptide synthesis (translation) in response to the termination codons UAA, UAG and UGA. Modulates plant growth and development. The sequence is that of Eukaryotic peptide chain release factor subunit 1-3 from Brassica oleracea var. botrytis (Cauliflower).